The following is a 245-amino-acid chain: Orotidine 5'-phosphate decarboxylase (245 aa).

Substrate contacts are provided by residues aspartate 22, lysine 44, 71 to 80 (DLKFHDIPNT), threonine 131, arginine 192, glutamine 201, glycine 221, and arginine 222. Catalysis depends on lysine 73, which acts as the Proton donor.

The protein belongs to the OMP decarboxylase family. Type 1 subfamily. As to quaternary structure, homodimer.

It catalyses the reaction orotidine 5'-phosphate + H(+) = UMP + CO2. It participates in pyrimidine metabolism; UMP biosynthesis via de novo pathway; UMP from orotate: step 2/2. Its function is as follows. Catalyzes the decarboxylation of orotidine 5'-monophosphate (OMP) to uridine 5'-monophosphate (UMP). This is Orotidine 5'-phosphate decarboxylase from Salmonella choleraesuis (strain SC-B67).